Here is a 117-residue protein sequence, read N- to C-terminus: UPF0342 protein lmo2223 (117 aa).

Belongs to the UPF0342 family.

The protein is UPF0342 protein lmo2223 of Listeria monocytogenes serovar 1/2a (strain ATCC BAA-679 / EGD-e).